Here is a 1010-residue protein sequence, read N- to C-terminus: Pre-mRNA-splicing factor cwc22 (1010 aa).

Residues 1 to 10 show a composition bias toward polar residues; the sequence is MASADMSPSR. The tract at residues 1–166 is disordered; it reads MASADMSPSR…RTPTPPPVAV (166 aa). Positions 18–28 are enriched in low complexity; that stretch reads RSPSPRTQSPS. Composition is skewed to basic and acidic residues over residues 29–39 and 65–78; these read PRDEDGSRSPG and PRRD…DQPH. Residues 84–109 show a composition bias toward low complexity; the sequence is RSPTPRSQSPSRRSVRSPSPRQGSPA. The segment covering 142–158 has biased composition (basic and acidic residues); that stretch reads RHRDAGGDYRPVRKERT. In terms of domain architecture, MIF4G spans 222–405; the sequence is KKSVNGLVNK…EVLFQVRKDK (184 aa). A disordered region spans residues 466–498; the sequence is GEASDDDEDDDDDDESESGSESEDEEQKALEIK. The segment covering 468 to 491 has biased composition (acidic residues); the sequence is ASDDDEDDDDDDESESGSESEDEE. An MI domain is found at 507 to 623; it reads NLRRTIYLSI…GWHVFSVIHL (117 aa). Residues 708–1010 are disordered; sequence LPAPPADSDS…SPVAKRGRVD (303 aa). Low complexity predominate over residues 718 to 732; the sequence is ESVSSYSSYSSYSSR. The segment covering 753 to 775 has biased composition (basic residues); sequence PPRRGRGRSYSRTPSRSRSRSRS. The span at 776–787 shows a compositional bias: low complexity; it reads YSRSVSKSVSRS. Composition is skewed to basic residues over residues 834-846 and 899-910; these read RRGR…RSRS and RLRRGSYSRSRS. The span at 911–935 shows a compositional bias: low complexity; it reads RSPIPIRGNGPAGRDTGRAGPAPAR. Residues 936 to 948 are compositionally biased toward basic residues; that stretch reads GGRRNRSYSRSRT. A compositionally biased stretch (low complexity) spans 961–973; the sequence is SRRVVSRSPSPVV. Residues 976–1010 show a composition bias toward basic residues; that stretch reads NKRRRSYSSSRSRSRSSSRSRYRSRSPVAKRGRVD.

This sequence belongs to the CWC22 family. In terms of assembly, associated with the spliceosome.

The protein localises to the cytoplasm. It localises to the nucleus. Its function is as follows. Involved in pre-mRNA splicing. The protein is Pre-mRNA-splicing factor cwc22 (msp-1) of Neurospora crassa (strain ATCC 24698 / 74-OR23-1A / CBS 708.71 / DSM 1257 / FGSC 987).